A 661-amino-acid polypeptide reads, in one-letter code: uncharacterized protein (661 aa).

16 helical membrane passes run 27-47, 68-88, 116-136, 150-170, 179-199, 214-234, 251-271, 279-299, 313-333, 369-389, 396-416, 435-455, 488-508, 519-539, 552-572, and 599-619; these read LAIGLLGVCAVVAAFGLVSGA, VGFFAASLAGALCLGALIHVV, LWLGLAATMVVIQAAHDTGVG, VAASEMARGWIVAAICALVVA, WLGHVVLLVPTVLAVVATAVT, AAIVFAVAFATLTGLKIAAAL, GALALAYGAMLLYLFIPGWAV, GLLAGVILTSVWLFDCWRLLV, GAALAMMAAMASIAAMAVMTA, SLIGAAGVVLAIGYAAGFAAL, WPVGRLIAWLTGCAALVFTSG, MTLNMFIPVLLVLGGPVTLAL, PITAFVLFVASPYIVYFTPLF, EFMAIHFLVVGYLFYWAIIGI, IGLLFAVMPFHAFFGIALMTM, and GGGIAWSLTELPVIMVIVALV.

This sequence to M.leprae ML1998.

The protein resides in the cell membrane. This is an uncharacterized protein from Mycobacterium tuberculosis (strain CDC 1551 / Oshkosh).